The primary structure comprises 412 residues: Putative gustatory receptor 58c (412 aa).

A run of 2 helical transmembrane segments spans residues 39–59 (VVYC…ALFV) and 72–92 (MFGV…LFLM). Residue asparagine 158 is glycosylated (N-linked (GlcNAc...) asparagine). A helical membrane pass occupies residues 173–193 (IVYALIMILLMSYVDMTVYMV). N-linked (GlcNAc...) asparagine glycosylation is present at asparagine 203. Helical transmembrane passes span 224–241 (IPRE…RKLW), 262–282 (VLFN…RLWI), and 296–316 (ILYA…FSIF). Residues asparagine 337, asparagine 386, and asparagine 391 are each glycosylated (N-linked (GlcNAc...) asparagine).

This sequence belongs to the insect chemoreceptor superfamily. Gustatory receptor (GR) family. Gr10a subfamily.

The protein localises to the cell membrane. In terms of biological role, probable gustatory receptor which mediates acceptance or avoidance behavior, depending on its substrates. The chain is Putative gustatory receptor 58c (Gr58c) from Drosophila melanogaster (Fruit fly).